The chain runs to 315 residues: Olfactory receptor 10H5 (315 aa).

Residues 1–25 (MQGLNHTSVSEFILVGFSAFPHLQL) lie on the Extracellular side of the membrane. Asparagine 5 carries an N-linked (GlcNAc...) asparagine glycan. Residues 26–46 (MLFLLFLLMYLFTLLGNLLIM) form a helical membrane-spanning segment. The Cytoplasmic segment spans residues 47–54 (ATVWSERS). The helical transmembrane segment at 55-75 (LHMPMYLFLCALSITEILYTV) threads the bilayer. Residues 76–99 (AIIPRMLADLLSTQRSIAFLACAS) are Extracellular-facing. Cysteine 97 and cysteine 189 are disulfide-bonded. A helical transmembrane segment spans residues 100–120 (QMFFSFSFGFTHSFLLTVMGY). Over 121–139 (DRYVAICHPLRYNVLMSLR) the chain is Cytoplasmic. Residues 140-160 (GCTCRVGCSWAGGLVMGMVVT) form a helical membrane-spanning segment. Topologically, residues 161-197 (SAIFHLAFCGHKEIHHFFCHVPPLLKLACGDDVLVVA) are extracellular. A helical transmembrane segment spans residues 198 to 218 (KGVGLVCITALLGCFLLILLS). Over 219–238 (YAFIVAAILKIPSAEGRNKA) the chain is Cytoplasmic. Residues 239-259 (FSTCASHLTVVVVHYGFASVI) traverse the membrane as a helical segment. Topologically, residues 260-272 (YLKPKGPQSPEGD) are extracellular. The chain crosses the membrane as a helical span at residues 273–293 (TLMGITYTVLTPFLSPIIFSL). At 294–315 (RNKELKVAMKKTCFTKLFPQNC) the chain is on the cytoplasmic side.

The protein belongs to the G-protein coupled receptor 1 family.

It localises to the cell membrane. In terms of biological role, odorant receptor. This Homo sapiens (Human) protein is Olfactory receptor 10H5 (OR10H5).